We begin with the raw amino-acid sequence, 504 residues long: L-carnitine/gamma-butyrobetaine antiporter (504 aa).

Transmembrane regions (helical) follow at residues 10 to 30 (IEPK…WLTV), 51 to 71 (WGWA…WLVF), 92 to 112 (IFMM…SIEI), 143 to 163 (GPLP…FFFV), 195 to 215 (FYLV…TPLV), 231 to 251 (LDAI…ACGL), 263 to 283 (SYLS…SFIM), 316 to 336 (WTVF…IFLA), 347 to 367 (LCFG…TVLG), 398 to 418 (WAAL…CFIA), 446 to 466 (LLVR…LLAL), and 475 to 495 (AIIA…LSFI).

This sequence belongs to the BCCT transporter (TC 2.A.15) family. CaiT subfamily. In terms of assembly, homotrimer.

The protein resides in the cell inner membrane. The catalysed reaction is 4-(trimethylamino)butanoate(in) + (R)-carnitine(out) = 4-(trimethylamino)butanoate(out) + (R)-carnitine(in). The protein operates within amine and polyamine metabolism; carnitine metabolism. Its function is as follows. Catalyzes the exchange of L-carnitine for gamma-butyrobetaine. The sequence is that of L-carnitine/gamma-butyrobetaine antiporter from Escherichia coli O6:K15:H31 (strain 536 / UPEC).